The primary structure comprises 474 residues: Proline--tRNA ligase (474 aa).

The protein belongs to the class-II aminoacyl-tRNA synthetase family. ProS type 3 subfamily. In terms of assembly, homodimer.

It is found in the cytoplasm. It carries out the reaction tRNA(Pro) + L-proline + ATP = L-prolyl-tRNA(Pro) + AMP + diphosphate. In terms of biological role, catalyzes the attachment of proline to tRNA(Pro) in a two-step reaction: proline is first activated by ATP to form Pro-AMP and then transferred to the acceptor end of tRNA(Pro). The protein is Proline--tRNA ligase of Mycoplasma capricolum subsp. capricolum (strain California kid / ATCC 27343 / NCTC 10154).